Consider the following 385-residue polypeptide: MKNITILGATGSIGTQTLDVIRKEKEELKLVAISANKSYKKVIEIIKEFKPKYAVLMEENAFKIVEDFCVNSKIDTKVLKGMEGMIYISTLEEINTVVTSVVGMIGLVPTIKAIESGKDIALANKETLVVAGELVISKAKEHNVNILPVDSEHGAIFQCLRGNKKEEVKNIIVTASGGPFRGRKKEELIDIKPEHALKHPKWNMGRKISIDSATLMNKGLEVIEAHFLFGVDYENIKVVVHPQSIVHSMVEYKDGSVIAQMATPDMKLPIQYALNYPNRKESQIEPLDFYKISNLTFEKPDMDTFLPLKLAYEAGKKGGVMPAILNGANEVAVDLFLKGKIEFLQIGDLLQECMNKFYKSMEATLENVISVDKEVREYLGKKYDI.

6 residues coordinate NADPH: T10, G11, S12, I13, K37, and N124. K125 is a binding site for 1-deoxy-D-xylulose 5-phosphate. E126 provides a ligand contact to NADPH. D150 is a Mn(2+) binding site. 1-deoxy-D-xylulose 5-phosphate-binding residues include S151, E152, S176, and H199. E152 provides a ligand contact to Mn(2+). An NADPH-binding site is contributed by G205. The 1-deoxy-D-xylulose 5-phosphate site is built by S212, N217, K218, and E221. A Mn(2+)-binding site is contributed by E221.

Belongs to the DXR family. Requires Mg(2+) as cofactor. Mn(2+) is required as a cofactor.

It catalyses the reaction 2-C-methyl-D-erythritol 4-phosphate + NADP(+) = 1-deoxy-D-xylulose 5-phosphate + NADPH + H(+). It participates in isoprenoid biosynthesis; isopentenyl diphosphate biosynthesis via DXP pathway; isopentenyl diphosphate from 1-deoxy-D-xylulose 5-phosphate: step 1/6. Functionally, catalyzes the NADPH-dependent rearrangement and reduction of 1-deoxy-D-xylulose-5-phosphate (DXP) to 2-C-methyl-D-erythritol 4-phosphate (MEP). The polypeptide is 1-deoxy-D-xylulose 5-phosphate reductoisomerase (Clostridium botulinum (strain 657 / Type Ba4)).